A 241-amino-acid chain; its full sequence is Triosephosphate isomerase (241 aa).

9-11 provides a ligand contact to substrate; sequence NWK. His96 (electrophile) is an active-site residue. Residue Glu165 is the Proton acceptor of the active site. Substrate contacts are provided by residues Gly171, Ser204, and 225 to 226; that span reads GG.

Belongs to the triosephosphate isomerase family. In terms of assembly, homodimer.

Its subcellular location is the cytoplasm. It catalyses the reaction D-glyceraldehyde 3-phosphate = dihydroxyacetone phosphate. It functions in the pathway carbohydrate biosynthesis; gluconeogenesis. Its pathway is carbohydrate degradation; glycolysis; D-glyceraldehyde 3-phosphate from glycerone phosphate: step 1/1. Involved in the gluconeogenesis. Catalyzes stereospecifically the conversion of dihydroxyacetone phosphate (DHAP) to D-glyceraldehyde-3-phosphate (G3P). The protein is Triosephosphate isomerase of Picosynechococcus sp. (strain ATCC 27264 / PCC 7002 / PR-6) (Agmenellum quadruplicatum).